Consider the following 554-residue polypeptide: Eukaryotic translation initiation factor 3 subunit D-2 (554 aa).

A disordered region spans residues 116–149; sequence RGNAAIGGGQGGAGGTGGAGVGNKYGKGRDMRRG. Gly residues predominate over residues 120-140; the sequence is AIGGGQGGAGGTGGAGVGNKY. Positions 291–305 are RNA gate; the sequence is QFDLLTVNETALEPP. The disordered stretch occupies residues 532 to 554; sequence FDSDGNDDEETSDDRPFLKSLGN.

The protein belongs to the eIF-3 subunit D family. As to quaternary structure, component of the eukaryotic translation initiation factor 3 (eIF-3) complex. The eIF-3 complex interacts with pix.

Its subcellular location is the cytoplasm. MRNA cap-binding component of the eukaryotic translation initiation factor 3 (eIF-3) complex, which is involved in protein synthesis of a specialized repertoire of mRNAs and, together with other initiation factors, stimulates binding of mRNA and methionyl-tRNAi to the 40S ribosome. The eIF-3 complex specifically targets and initiates translation of a subset of mRNAs involved in cell proliferation. In the eIF-3 complex, eif3d specifically recognizes and binds the 7-methylguanosine cap of a subset of mRNAs. The protein is Eukaryotic translation initiation factor 3 subunit D-2 of Drosophila virilis (Fruit fly).